The following is a 116-amino-acid chain: MNTVRVAFLLVFVLAVSLGQADKDENRMEMQEKTEQGKSYLDFAENLLLQKLEELEAKLLEEDSEESRNSRQKRCIGEGVPCDENDPRCCSGLVCLKPTLHGIWYKSYYCYKKRSA.

The first 21 residues, 1–21 (MNTVRVAFLLVFVLAVSLGQA), serve as a signal peptide directing secretion. Positions 22 to 74 (DKDENRMEMQEKTEQGKSYLDFAENLLLQKLEELEAKLLEEDSEESRNSRQKR) are excised as a propeptide. The interval 61 to 83 (EEDSEESRNSRQKRCIGEGVPCD) is disordered. Disulfide bonds link Cys75–Cys90, Cys82–Cys95, and Cys89–Cys110.

It belongs to the neurotoxin 14 (magi-1) family. 01 (HNTX-16) subfamily. In terms of tissue distribution, expressed by the venom gland.

The protein resides in the secreted. Probable ion channel inhibitor. The polypeptide is U11-theraphotoxin-Hhn1b (Cyriopagopus hainanus (Chinese bird spider)).